We begin with the raw amino-acid sequence, 299 residues long: Bifunctional protein FolD (299 aa).

Residues 168–170 (GRS), S193, and I234 each bind NADP(+).

The protein belongs to the tetrahydrofolate dehydrogenase/cyclohydrolase family. Homodimer.

It carries out the reaction (6R)-5,10-methylene-5,6,7,8-tetrahydrofolate + NADP(+) = (6R)-5,10-methenyltetrahydrofolate + NADPH. The catalysed reaction is (6R)-5,10-methenyltetrahydrofolate + H2O = (6R)-10-formyltetrahydrofolate + H(+). It functions in the pathway one-carbon metabolism; tetrahydrofolate interconversion. Functionally, catalyzes the oxidation of 5,10-methylenetetrahydrofolate to 5,10-methenyltetrahydrofolate and then the hydrolysis of 5,10-methenyltetrahydrofolate to 10-formyltetrahydrofolate. This is Bifunctional protein FolD from Bartonella quintana (strain Toulouse) (Rochalimaea quintana).